Here is a 1198-residue protein sequence, read N- to C-terminus: Spindle-defective protein 5 (1198 aa).

Positions 1-10 (MEDNSVLNED) are enriched in polar residues. Positions 1-45 (MEDNSVLNEDSNLEHVEGQPRRSMSQPVLNVEGDKRTSSTSATQQ) are disordered. Coiled coils occupy residues 67–381 (EENK…QLTG), 566–603 (HDVA…FEEI), 694–916 (KFTS…LSTS), 983–1035 (DELC…ENVP), and 1127–1175 (KNET…EFQD).

Its subcellular location is the cytoplasm. It localises to the cytoskeleton. The protein localises to the microtubule organizing center. The protein resides in the centrosome. Functionally, plays a central role in centrosome maturation and mitotic spindle assembly during the first division of the zygote. Required for the centrosomal localization of air-1 and zyg-9. Probably not required in late embryogenesis and during larval development. This Caenorhabditis elegans protein is Spindle-defective protein 5 (spd-5).